The primary structure comprises 101 residues: Small ribosomal subunit protein uS14 (101 aa).

This sequence belongs to the universal ribosomal protein uS14 family. Part of the 30S ribosomal subunit. Contacts proteins S3 and S10.

Its function is as follows. Binds 16S rRNA, required for the assembly of 30S particles and may also be responsible for determining the conformation of the 16S rRNA at the A site. The chain is Small ribosomal subunit protein uS14 from Stenotrophomonas maltophilia (strain K279a).